We begin with the raw amino-acid sequence, 550 residues long: MSDTPRKLSLNKLSLKRDSAPEAPKLEERLHKVLAQAGLGSRRALEQRIADGLIKVNGAVAQTGMSVRSGDKIELDGRSFVASALTEPSRVLIYNKPEGEVTTREDPEGRPTVFESLPVLKGSRWIAIGRLDINTTGLLLLTTDGELANAMMHPSYEVEREYVVRVRAPEGEEKVSDAIIERLSRGVLLEDGGAKFDEIERIGGTDSHDWFRVVVKEGRNREVRRLWESQGCQVSRLKRSRYGKISLPRELLRGHSVEVAQDKVDALRAELKLEEGAPSALTLQPVIGQRRAAKSTVHVSRDGRSNAYVNGQTSGADEGRELRRFDNLREDRGRGGRGKPGGFKGGLTVSGEAAARQSQQRPFKQRGPAKGDRGALPDGNPAAFRSWYVPDGVSTGPSGHRNAGPSGPGTGQARPYAKKGPGGARPGTGGPVGARSGGPGRGAGGGQGQSQGQGQRKHPYGHPGNAPSFPSDHANPGFNPYGAARPAGRPSGGRPGPGGNRGPASANRGPGGPGGGARGPGGPGGAPRGPGGRPPGGGNRRPPGGGNRGR.

The S4 RNA-binding domain occupies 28–97; sequence ERLHKVLAQA…PSRVLIYNKP (70 aa). Residue Asp132 is the Nucleophile of the active site. The disordered stretch occupies residues 294–550; it reads KSTVHVSRDG…RPPGGGNRGR (257 aa). A compositionally biased stretch (basic and acidic residues) spans 317–334; that stretch reads DEGRELRRFDNLREDRGR. Composition is skewed to gly residues over residues 420–451, 490–501, and 509–550; these read GPGG…GQSQ, PSGGRPGPGGNR, and GPGG…NRGR.

It belongs to the pseudouridine synthase RsuA family.

It catalyses the reaction uridine(2605) in 23S rRNA = pseudouridine(2605) in 23S rRNA. In terms of biological role, responsible for synthesis of pseudouridine from uracil-2605 in 23S ribosomal RNA. In Xanthomonas axonopodis pv. citri (strain 306), this protein is Ribosomal large subunit pseudouridine synthase B (rluB).